The primary structure comprises 371 residues: ATP-dependent protease ATP-binding subunit-like protein AmiB (371 aa).

ATP is bound at residue 96–103 (GPTGVGKT).

Belongs to the ClpX chaperone family. Requires Mg(2+) as cofactor.

Functionally, unlikely to encode a regulatory protein. Has ATPase activity. AmiB and AmiS may act jointly into a two component ABC transporter system. This is ATP-dependent protease ATP-binding subunit-like protein AmiB (amiB) from Pseudomonas aeruginosa (strain ATCC 15692 / DSM 22644 / CIP 104116 / JCM 14847 / LMG 12228 / 1C / PRS 101 / PAO1).